Here is a 156-residue protein sequence, read N- to C-terminus: Biotin carboxyl carrier protein of acetyl-CoA carboxylase (156 aa).

Residues Pro73–Glu156 form the Biotinyl-binding domain. Lys122 carries the post-translational modification N6-biotinyllysine.

As to quaternary structure, homodimer.

It functions in the pathway lipid metabolism; fatty acid biosynthesis. Its function is as follows. This protein is a component of the acetyl coenzyme A carboxylase complex; first, biotin carboxylase catalyzes the carboxylation of the carrier protein and then the transcarboxylase transfers the carboxyl group to form malonyl-CoA. This Escherichia coli O6:H1 (strain CFT073 / ATCC 700928 / UPEC) protein is Biotin carboxyl carrier protein of acetyl-CoA carboxylase (accB).